A 245-amino-acid polypeptide reads, in one-letter code: MTLTASSSSRAVTNSPVVVALDYHNRDAAMAFVDKIDPRDCRLKVGKEMFTLFGPQFVSELQQRGFDIFLDLKFHDIPNTAAHAVAAAADLGVWMVNVHASGGARMMAAAREALVPFGKDAPLLIAVTVLTSMEASDLADLGVTLSPADYAERLAALTQKCGLDGVVCSAQEAVRFKQVFGQEFKLVTPGIRPQGSDAGDQRRIMTPEQALSAGVDYMVIGRPVTQSVDPAQTLKAINASLQRSA.

Substrate is bound by residues aspartate 22, lysine 44, 71–80, threonine 131, arginine 192, glutamine 201, glycine 221, and arginine 222; that span reads DLKFHDIPNT. Lysine 73 acts as the Proton donor in catalysis.

The protein belongs to the OMP decarboxylase family. Type 1 subfamily. In terms of assembly, homodimer.

It catalyses the reaction orotidine 5'-phosphate + H(+) = UMP + CO2. The protein operates within pyrimidine metabolism; UMP biosynthesis via de novo pathway; UMP from orotate: step 2/2. Its function is as follows. Catalyzes the decarboxylation of orotidine 5'-monophosphate (OMP) to uridine 5'-monophosphate (UMP). The polypeptide is Orotidine 5'-phosphate decarboxylase (Escherichia coli O81 (strain ED1a)).